Here is a 578-residue protein sequence, read N- to C-terminus: Triokinase/FMN cyclase (578 aa).

The region spanning Ser-9–Trp-336 is the DhaK domain. Dihydroxyacetone contacts are provided by residues Gly-56–His-59, Lys-109, and Asp-114. His-221 (tele-hemiaminal-histidine intermediate) is an active-site residue. At Ser-350 the chain carries Phosphoserine. In terms of domain architecture, DhaL spans Lys-372–Glu-571. Residues Asp-401–Cys-404, Ser-446–Ser-447, Gly-486, and Thr-494–Met-495 contribute to the ATP site. Residues Ser-511 and Ser-545 each carry the phosphoserine modification. Asp-556–Gly-558 contributes to the ATP binding site.

As to quaternary structure, homodimer. Interacts with IFIH1 (via the CARD domains), the interaction is inhibited by viral infection. It depends on Mg(2+) as a cofactor. The cofactor is Mn(2+). Co(2+) is required as a cofactor.

The enzyme catalyses dihydroxyacetone + ATP = dihydroxyacetone phosphate + ADP + H(+). It catalyses the reaction D-glyceraldehyde + ATP = D-glyceraldehyde 3-phosphate + ADP + H(+). The catalysed reaction is FAD = riboflavin cyclic-4',5'-phosphate + AMP + H(+). With respect to regulation, each activity is inhibited by the substrate(s) of the other. In terms of biological role, catalyzes both the phosphorylation of dihydroxyacetone and of glyceraldehyde, and the splitting of ribonucleoside diphosphate-X compounds among which FAD is the best substrate. Represses IFIH1-mediated cellular antiviral response. The sequence is that of Triokinase/FMN cyclase (TKFC) from Bos taurus (Bovine).